The sequence spans 321 residues: MKQQAGIGILLALTTAICWGALPIAMKQVLEVMEPPTIVFYRFLMASIGLGAILAVKKRLPPLRVFRKPRWLILLAVATAGLFGNFILFSSSLQYLSPTASQVIGQLSPVGMMVASVFILKEKMRSTQVVGALMLLSGLVMFFNTSLVEIFTKLTDYTWGVIFGVGAATVWVSYGVAQKVLLRRLASPQILFLLYTLCTIALFPLAKPGVIAQLSHWQLACLIFCGLNTLVGYGALAEAMARWQAAQVSAIITLTPLFTLFFSDLLSLAWPDFFARPMLNLLGYLGAFVVVAGAMYSAIGHRIWGGLRKHTTVVSQPRAGE.

The Cytoplasmic segment spans residues 1–5 (MKQQA). Residues 6-26 (GIGILLALTTAICWGALPIAM) traverse the membrane as a helical segment. Residues 17–144 (ICWGALPIAM…LLSGLVMFFN (128 aa)) form the EamA 1 domain. Over 27–35 (KQVLEVMEP) the chain is Periplasmic. Residues 36-56 (PTIVFYRFLMASIGLGAILAV) traverse the membrane as a helical segment. At 57–70 (KKRLPPLRVFRKPR) the chain is on the cytoplasmic side. Residues 71–91 (WLILLAVATAGLFGNFILFSS) form a helical membrane-spanning segment. Topologically, residues 92-99 (SLQYLSPT) are periplasmic. The chain crosses the membrane as a helical span at residues 100 to 120 (ASQVIGQLSPVGMMVASVFIL). Over 121-130 (KEKMRSTQVV) the chain is Cytoplasmic. The chain crosses the membrane as a helical span at residues 131–151 (GALMLLSGLVMFFNTSLVEIF). At 152–156 (TKLTD) the chain is on the periplasmic side. Residues 157–177 (YTWGVIFGVGAATVWVSYGVA) traverse the membrane as a helical segment. Positions 169-292 (TVWVSYGVAQ…GYLGAFVVVA (124 aa)) constitute an EamA 2 domain. Over 178-190 (QKVLLRRLASPQI) the chain is Cytoplasmic. The chain crosses the membrane as a helical span at residues 191–211 (LFLLYTLCTIALFPLAKPGVI). The Periplasmic segment spans residues 212-216 (AQLSH). The helical transmembrane segment at 217-237 (WQLACLIFCGLNTLVGYGALA) threads the bilayer. Residues 238 to 249 (EAMARWQAAQVS) lie on the Cytoplasmic side of the membrane. A helical membrane pass occupies residues 250 to 270 (AIITLTPLFTLFFSDLLSLAW). Over 271 to 278 (PDFFARPM) the chain is Periplasmic. Residues 279–299 (LNLLGYLGAFVVVAGAMYSAI) traverse the membrane as a helical segment. Over 300–321 (GHRIWGGLRKHTTVVSQPRAGE) the chain is Cytoplasmic.

Belongs to the EamA transporter family.

It localises to the cell inner membrane. This is an uncharacterized protein from Escherichia coli O157:H7.